The following is a 754-amino-acid chain: MKELCYGSVCSGIEAASIAWEPLGMRPAWFAEIEPFPSAVLAHRWPHVANLGDMTKLAKKVLAGEIESPDVLVWGTPCQAFSIAGLRGGLDDERGALTLKYVELANAIDDKRSESFLKPTVIVWENVPGVLSSADNAFGCFLAGLAGEDAPFEPGDRPESGKSNAFWRWDGKTGCHAPKWPQCGCIYGPQRKVAWRILDAQYFGVAQRRRRVFVVASARTDLDPATVLFEFEGVRRNIAPRRKKKEIASAIIANGAAISGESLNPCLHADMPPSMKSTKAVNAFRMAAFGEYIDDETASTVKARDFKDATDLAVFSSTGAGFWSEGHGTLRAREQESHEHLVTLAFPERMSGTQHAATKNTSPSLMAKNPTAVCYEVRNAEVAVRRLTPVECERLQGFPDGHTLIPTEKRKKVNSDELAYLRNHYPDLSEEEAAMLAADGPRYKAIGNSMAIPVMRWIGDRITKAVCRQKEGSETKERKVKPAAEFERSIFKWAGGKFGVLEQIFRYLPEGKRLIEPFVGGGAVFTNAGYQENLLNDVNADLINFYKTLQREAHSLITLAHRFFQDYNTQEGYLAVRNAFNKQVYDDLHRAAAFLFLNRHCFNGLTRYNQAGEFNVGYGKYKTPYFPLQEMEAFLGAEGRSEFVCGDFAAVIEAAGEGDVIFCDPPYEPLPNTEGFTNYSGHDFKFEEQKRLVSLLTDAHRRGAKVLITNSGAPNIRELYHDSGFRVEPLFARRSVSCKGDTRGVAHDVLGILL.

Positions 4 to 469 (LCYGSVCSGI…DRITKAVCRQ (466 aa)) constitute an SAM-dependent MTase C5-type domain. Cysteine 78 is an active-site residue.

The protein belongs to the class I-like SAM-binding methyltransferase superfamily. C5-methyltransferase family. As to quaternary structure, homodimer. Requires Mg(2+) as cofactor. The cofactor is Ca(2+).

The enzyme catalyses a 2'-deoxyadenosine in DNA + S-adenosyl-L-methionine = an N(6)-methyl-2'-deoxyadenosine in DNA + S-adenosyl-L-homocysteine + H(+). In terms of biological role, methyltransferase that methylates adenine residues in the ssDNA and dsDNA sequence 5'-AGACC-3'. Essential for genome packaging because methylation within the pac site makes the latter cleavable. May prevent degradation of viral DNA by the host restriction-modification antiviral defense system. In Enterobacteriaceae (Bacteriophage P1), this protein is DNA N-6-adenine-methyltransferase (dmt).